Reading from the N-terminus, the 701-residue chain is Elongation factor G 1 (701 aa).

One can recognise a tr-type G domain in the interval 8–290; sequence VRYRNIGICA…AVVEYLPAPT (283 aa). GTP-binding positions include 17–24, 88–92, and 142–145; these read AHVDAGKT, DTPGH, and NKMD.

This sequence belongs to the TRAFAC class translation factor GTPase superfamily. Classic translation factor GTPase family. EF-G/EF-2 subfamily.

The protein localises to the cytoplasm. Its function is as follows. Catalyzes the GTP-dependent ribosomal translocation step during translation elongation. During this step, the ribosome changes from the pre-translocational (PRE) to the post-translocational (POST) state as the newly formed A-site-bound peptidyl-tRNA and P-site-bound deacylated tRNA move to the P and E sites, respectively. Catalyzes the coordinated movement of the two tRNA molecules, the mRNA and conformational changes in the ribosome. The sequence is that of Elongation factor G 1 from Saccharophagus degradans (strain 2-40 / ATCC 43961 / DSM 17024).